The chain runs to 517 residues: Bifunctional purine biosynthesis protein PurH (517 aa).

Residues 1–145 (MSPLALVSVS…KNHKYVSVLV (145 aa)) enclose the MGS-like domain.

This sequence belongs to the PurH family.

It carries out the reaction (6R)-10-formyltetrahydrofolate + 5-amino-1-(5-phospho-beta-D-ribosyl)imidazole-4-carboxamide = 5-formamido-1-(5-phospho-D-ribosyl)imidazole-4-carboxamide + (6S)-5,6,7,8-tetrahydrofolate. The enzyme catalyses IMP + H2O = 5-formamido-1-(5-phospho-D-ribosyl)imidazole-4-carboxamide. It participates in purine metabolism; IMP biosynthesis via de novo pathway; 5-formamido-1-(5-phospho-D-ribosyl)imidazole-4-carboxamide from 5-amino-1-(5-phospho-D-ribosyl)imidazole-4-carboxamide (10-formyl THF route): step 1/1. Its pathway is purine metabolism; IMP biosynthesis via de novo pathway; IMP from 5-formamido-1-(5-phospho-D-ribosyl)imidazole-4-carboxamide: step 1/1. In Prochlorococcus marinus (strain MIT 9215), this protein is Bifunctional purine biosynthesis protein PurH.